The chain runs to 156 residues: MSRRSTAKKRLILPDPIYNSRLVTLLINHMLKDGKKSIARSFIYEALKIIEEKKGSDPLEVLEQAVRNSTPLIEVKARRIGGSTYQVPMEVRVDRGITLALRVVNSFSLQRLGKTIAVKLANELIDAANETGNTIKKREEMHRMAEANKAFVHYRY.

It belongs to the universal ribosomal protein uS7 family. Part of the 30S ribosomal subunit.

The protein resides in the plastid. It is found in the cyanelle. Its function is as follows. One of the primary rRNA binding proteins, it binds directly to 16S rRNA where it nucleates assembly of the head domain of the 30S subunit. The sequence is that of Small ribosomal subunit protein uS7c (rps7) from Cyanophora paradoxa.